Consider the following 301-residue polypeptide: Probable 5-dehydro-4-deoxyglucarate dehydratase (301 aa).

Belongs to the DapA family.

The catalysed reaction is 5-dehydro-4-deoxy-D-glucarate + H(+) = 2,5-dioxopentanoate + CO2 + H2O. It functions in the pathway carbohydrate acid metabolism; D-glucarate degradation; 2,5-dioxopentanoate from D-glucarate: step 2/2. The chain is Probable 5-dehydro-4-deoxyglucarate dehydratase from Rhizobium meliloti (strain 1021) (Ensifer meliloti).